Consider the following 312-residue polypeptide: Methionyl-tRNA formyltransferase (312 aa).

110–113 (SLLP) contacts (6S)-5,6,7,8-tetrahydrofolate.

It belongs to the Fmt family.

It catalyses the reaction L-methionyl-tRNA(fMet) + (6R)-10-formyltetrahydrofolate = N-formyl-L-methionyl-tRNA(fMet) + (6S)-5,6,7,8-tetrahydrofolate + H(+). Attaches a formyl group to the free amino group of methionyl-tRNA(fMet). The formyl group appears to play a dual role in the initiator identity of N-formylmethionyl-tRNA by promoting its recognition by IF2 and preventing the misappropriation of this tRNA by the elongation apparatus. The polypeptide is Methionyl-tRNA formyltransferase (Koribacter versatilis (strain Ellin345)).